The chain runs to 465 residues: ATP-dependent rRNA helicase rrp3 (465 aa).

The interval 1 to 46 is disordered; that stretch reads MSALKKRKITEKQPETNSDSEAESVSSRGSAKDETQTSGEEPAPAK. Residues 15-29 are compositionally biased toward polar residues; that stretch reads ETNSDSEAESVSSRG. The Q motif motif lies at 46 to 74; that stretch reads KSFKELGIIDQLCEACENMGYKAPTPIQS. The region spanning 77 to 248 is the Helicase ATP-binding domain; it reads IPLALEGRDV…RASLSNPVRV (172 aa). Position 90–97 (90–97) interacts with ATP; sequence AETGSGKT. Positions 196–199 match the DEAD box motif; it reads DEAD. Residues 275-419 form the Helicase C-terminal domain; sequence YLVYLLNEFA…EYQVEKDEVM (145 aa). Residues 436–465 are disordered; it reads MKSFDEKKGARGKKFGKGKRSRDDMDQEEG. Basic residues predominate over residues 445–455; sequence ARGKKFGKGKR.

Belongs to the DEAD box helicase family. DDX47/RRP3 subfamily. Interacts with the SSU processome.

Its subcellular location is the nucleus. It carries out the reaction ATP + H2O = ADP + phosphate + H(+). ATP-dependent rRNA helicase required for pre-ribosomal RNA processing. Involved in the maturation of the 35S-pre-rRNA and to its cleavage to mature 18S rRNA. The sequence is that of ATP-dependent rRNA helicase rrp3 from Emericella nidulans (strain FGSC A4 / ATCC 38163 / CBS 112.46 / NRRL 194 / M139) (Aspergillus nidulans).